A 686-amino-acid chain; its full sequence is MAM domain-containing protein 2 (686 aa).

Residues 1-18 (MLLEGVLLVVQALQLASA) form the signal peptide. MAM domains lie at 24–169 (GSCA…YCIE), 168–329 (IECD…HCQN), 340–498 (TSCD…NCRS), and 507–666 (GECT…PCAG). N-linked (GlcNAc...) asparagine glycosylation is found at Asn134 and Asn329. Asn524 carries an N-linked (GlcNAc...) asparagine glycan. Residues 665 to 686 (AGMEDTTEQSSGYSEDLNEIEY) form a disordered region.

O-glycosylated; contains chondroitin sulfate.

The protein resides in the secreted. It localises to the extracellular space. The protein localises to the extracellular matrix. In Mus musculus (Mouse), this protein is MAM domain-containing protein 2 (Mamdc2).